Consider the following 61-residue polypeptide: MAVPRRKTSPSRRGMRRSADALKKPTYVEDKDSGELRRPHHLDLKTGMYKGRQVLKVKKED.

Positions Met1–Arg16 are enriched in basic residues. The segment at Met1–Asp61 is disordered. The span at Arg17–Leu44 shows a compositional bias: basic and acidic residues.

Belongs to the bacterial ribosomal protein bL32 family.

This chain is Large ribosomal subunit protein bL32, found in Afipia carboxidovorans (strain ATCC 49405 / DSM 1227 / KCTC 32145 / OM5) (Oligotropha carboxidovorans).